The following is a 160-amino-acid chain: Peripheral myelin protein 22 (160 aa).

M1 is a topological domain (cytoplasmic). A helical transmembrane segment spans residues 2 to 31; it reads LLLLLSIIVLHVAVLVLLFVSTIVSQWIVG. Over 32–64 the chain is Extracellular; the sequence is NGHATDLWQNCSTSSSGNVHHCFSSSPNEWLQS. An N-linked (GlcNAc...) asparagine glycan is attached at N41. Residues 65–91 form a helical membrane-spanning segment; the sequence is VQATMILSIIFSILSLFLFFCQLFTLT. Residues 92-95 are Cytoplasmic-facing; it reads KGGR. Residues 96–119 traverse the membrane as a helical segment; that stretch reads FYITGIFQILAGLCVMSAAAIYTV. Residues 120 to 133 lie on the Extracellular side of the membrane; the sequence is RHPEWHLNSDYSYG. The chain crosses the membrane as a helical span at residues 134-156; sequence FAYILAWVAFPLALLSGVIYVIL. At 157–160 the chain is on the cytoplasmic side; sequence RKRE.

It belongs to the PMP-22/EMP/MP20 family. Post-translationally, ubiquitinated by the DCX(DCAF13) E3 ubiquitin ligase complex, leading to its degradation.

The protein localises to the cell membrane. Might be involved in growth regulation, and in myelinization in the peripheral nervous system. The chain is Peripheral myelin protein 22 (PMP22) from Homo sapiens (Human).